A 678-amino-acid chain; its full sequence is Endopolyphosphatase (678 aa).

The Cytoplasmic segment spans residues 1–2 (MR). Residues 3 to 23 (SPLLASLFALALSIASSEAAI) traverse the membrane as a helical; Signal-anchor for type II membrane protein segment. Residues 24–678 (SSTEQVPLSG…ELMLVSTETD (655 aa)) are Vacuolar-facing. The segment at 70-109 (YKTGSTFDSGCHRKPKKDGKSEGKKATENERGNEDLDDKE) is disordered. The span at 87 to 103 (DGKSEGKKATENERGNE) shows a compositional bias: basic and acidic residues. Residues N138, N369, and N447 are each glycosylated (N-linked (GlcNAc...) asparagine). The tract at residues 504 to 547 (KGSGGHRHDVPKGDCSLPSNEDKPHCTFKRKPRHYSKRSPSRTN) is disordered. Basic residues predominate over residues 529 to 543 (CTFKRKPRHYSKRSP). 2 N-linked (GlcNAc...) asparagine glycosylation sites follow: N591 and N616.

Belongs to the endopolyphosphatase PPN1 family. A divalent metal cation serves as cofactor. In terms of processing, processing by proteases in the vacuole may be required for activation.

The protein resides in the vacuole membrane. The catalysed reaction is [phosphate](n+1) + n H2O = (n+1) phosphate + n H(+). Catalyzes the hydrolysis of inorganic polyphosphate (polyP) chains of many hundreds of phosphate residues into shorter lengths. The sequence is that of Endopolyphosphatase (PPN1) from Cryptococcus neoformans var. neoformans serotype D (strain JEC21 / ATCC MYA-565) (Filobasidiella neoformans).